A 254-amino-acid polypeptide reads, in one-letter code: Small ribosomal subunit protein uS2 (254 aa).

Belongs to the universal ribosomal protein uS2 family.

In Brucella ovis (strain ATCC 25840 / 63/290 / NCTC 10512), this protein is Small ribosomal subunit protein uS2.